Reading from the N-terminus, the 1686-residue chain is A disintegrin and metalloproteinase with thrombospondin motifs 7 (1686 aa).

An N-terminal signal peptide occupies residues 1-27 (MPGGPSPRSPAPLLRPLLLLLCALAPG). A propeptide spanning residues 28–236 (APGPAPGRAT…RPRLRRLHQR (209 aa)) is cleaved from the precursor. Residue Asn94 is glycosylated (N-linked (GlcNAc...) asparagine). The short motif at 202-209 (STCGVQVY) is the Cysteine switch element. Position 204 (Cys204) interacts with Zn(2+). The Peptidase M12B domain occupies 242–452 (KWVETLVVAD…GWGLCLDDPP (211 aa)). 11 disulfide bridges follow: Cys318/Cys372, Cys347/Cys354, Cys366/Cys447, Cys405/Cys431, Cys474/Cys497, Cys485/Cys503, Cys492/Cys522, Cys516/Cys527, Cys550/Cys587, Cys554/Cys592, and Cys565/Cys577. Residue His388 coordinates Zn(2+). Residue Glu389 is part of the active site. His392 and His398 together coordinate Zn(2+). Residues 462–537 (VPPGVLYDVS…VPVGFRPEAV (76 aa)) form the Disintegrin domain. Residues 538–593 (DGGWSGWSAWSICSRSCGMGVQSAERQCTQPTPKYKGRYCVGERKRFRLCNLQACP) form the TSP type-1 1 domain. Residues Asn693 and Asn778 are each glycosylated (N-linked (GlcNAc...) asparagine). A spacer region spans residues 698 to 809 (HTVSGTFEEA…PGVHYEYTIH (112 aa)). TSP type-1 domains are found at residues 821–880 (PVFS…QPCP), 881–940 (ARWW…NRHV), and 942–995 (CPAT…PLCR). Disordered regions lie at residues 1024 to 1043 (HHLAPRPSPASSPKPGTMGN), 1080 to 1257 (PSEE…SPDV), and 1344 to 1396 (LGHM…PLAP). The segment covering 1182–1205 (DGLQTPATPESQNDFPVGKDSQSQ) has biased composition (polar residues). Basic and acidic residues predominate over residues 1210-1226 (WRDRTNEVFKDDEEPKG). The segment covering 1360 to 1375 (PESLSPEVPLSSRLLS) has biased composition (low complexity). TSP type-1 domains lie at 1411-1459 (RNAG…RRCH), 1462-1522 (PCAT…QPCL), 1523-1567 (SWYT…PCNT), and 1569-1629 (PCTQ…EDCE). The PLAC domain maps to 1632-1672 (EPPRCERDRLSFGFCETLRLLGRCQLPTIRTQCCRSCSPPS). The disordered stretch occupies residues 1666–1686 (RSCSPPSHGAPSRGHQRVARR).

Interacts with COMP. Zn(2+) is required as a cofactor. Post-translationally, N-glycosylated. Can be O-fucosylated by POFUT2 on a serine or a threonine residue found within the consensus sequence C1-X(2)-(S/T)-C2-G of the TSP type-1 repeat domains where C1 and C2 are the first and second cysteine residue of the repeat, respectively. Fucosylated repeats can then be further glycosylated by the addition of a beta-1,3-glucose residue by the glucosyltransferase, B3GALTL. Fucosylation mediates the efficient secretion of ADAMTS family members. Can also be C-glycosylated with one or two mannose molecules on tryptophan residues within the consensus sequence W-X-X-W of the TPRs. N- and C-glycosylations can also facilitate secretion. In terms of processing, O-glycosylated proteoglycan; contains chondroitin sulfate. May be cleaved by a furin endopeptidase. The precursor is sequentially processed. In terms of tissue distribution, expressed in heart, brain, placenta, lung, liver, skeletal muscle, kidney and pancreas. Detected in meniscus, bone, tendon, cartilage, synovium, fat and ligaments.

It is found in the secreted. The protein localises to the extracellular space. Its subcellular location is the extracellular matrix. Its function is as follows. Metalloprotease. Was previously shown to degrade COMP. However, a later study found no activity against COMP. The polypeptide is A disintegrin and metalloproteinase with thrombospondin motifs 7 (ADAMTS7) (Homo sapiens (Human)).